We begin with the raw amino-acid sequence, 185 residues long: Elongation factor P (185 aa).

It belongs to the elongation factor P family.

It localises to the cytoplasm. Its pathway is protein biosynthesis; polypeptide chain elongation. Involved in peptide bond synthesis. Stimulates efficient translation and peptide-bond synthesis on native or reconstituted 70S ribosomes in vitro. Probably functions indirectly by altering the affinity of the ribosome for aminoacyl-tRNA, thus increasing their reactivity as acceptors for peptidyl transferase. This is Elongation factor P from Paraburkholderia xenovorans (strain LB400).